The following is a 245-amino-acid chain: tRNA (guanine-N(1)-)-methyltransferase (245 aa).

Residues Gly108 and 127-132 (IGDYVL) each bind S-adenosyl-L-methionine.

This sequence belongs to the RNA methyltransferase TrmD family. In terms of assembly, homodimer.

The protein resides in the cytoplasm. The enzyme catalyses guanosine(37) in tRNA + S-adenosyl-L-methionine = N(1)-methylguanosine(37) in tRNA + S-adenosyl-L-homocysteine + H(+). In terms of biological role, specifically methylates guanosine-37 in various tRNAs. The polypeptide is tRNA (guanine-N(1)-)-methyltransferase (Lactobacillus delbrueckii subsp. bulgaricus (strain ATCC 11842 / DSM 20081 / BCRC 10696 / JCM 1002 / NBRC 13953 / NCIMB 11778 / NCTC 12712 / WDCM 00102 / Lb 14)).